The sequence spans 221 residues: UPF0758 protein PC1_4100 (221 aa).

Residues 99-221 (AMLNPQATGQ…YVSFAERGWI (123 aa)) form the MPN domain. Zn(2+)-binding residues include His-170, His-172, and Asp-183. Positions 170–183 (HNHPSGKAEPSQAD) match the JAMM motif motif.

The protein belongs to the UPF0758 family. YicR subfamily.

This Pectobacterium carotovorum subsp. carotovorum (strain PC1) protein is UPF0758 protein PC1_4100.